The following is a 1244-amino-acid chain: ATP-dependent helicase/nuclease subunit A (1244 aa).

The UvrD-like helicase ATP-binding domain maps to 4-475 (KKWTAEQLAA…IGLSKNFRSR (472 aa)). 25–32 (AAAGAGKT) contacts ATP. The UvrD-like helicase C-terminal domain maps to 515-816 (EDVKTATGPV…RIMSIHKSKG (302 aa)). Residues 538–559 (EQNTDSAEEKLTDGEEQEDLDS) are disordered.

This sequence belongs to the helicase family. AddA subfamily. As to quaternary structure, heterodimer of AddA and AddB/RexB. Mg(2+) is required as a cofactor.

The catalysed reaction is Couples ATP hydrolysis with the unwinding of duplex DNA by translocating in the 3'-5' direction.. The enzyme catalyses ATP + H2O = ADP + phosphate + H(+). Its function is as follows. The heterodimer acts as both an ATP-dependent DNA helicase and an ATP-dependent, dual-direction single-stranded exonuclease. Recognizes the chi site generating a DNA molecule suitable for the initiation of homologous recombination. The AddA nuclease domain is required for chi fragment generation; this subunit has the helicase and 3' -&gt; 5' nuclease activities. The protein is ATP-dependent helicase/nuclease subunit A of Desulforamulus reducens (strain ATCC BAA-1160 / DSM 100696 / MI-1) (Desulfotomaculum reducens).